The sequence spans 376 residues: ATP phosphoribosyltransferase regulatory subunit (376 aa).

The protein belongs to the class-II aminoacyl-tRNA synthetase family. HisZ subfamily. Heteromultimer composed of HisG and HisZ subunits.

It is found in the cytoplasm. It functions in the pathway amino-acid biosynthesis; L-histidine biosynthesis; L-histidine from 5-phospho-alpha-D-ribose 1-diphosphate: step 1/9. Required for the first step of histidine biosynthesis. May allow the feedback regulation of ATP phosphoribosyltransferase activity by histidine. The protein is ATP phosphoribosyltransferase regulatory subunit of Brucella ovis (strain ATCC 25840 / 63/290 / NCTC 10512).